Consider the following 247-residue polypeptide: Pulmonary surfactant-associated protein A (247 aa).

The first 19 residues, 1–19 (MWCSLALILILVTVSGIMC), serve as a signal peptide directing secretion. Asparagine 20 carries N-linked (GlcNAc...) asparagine glycosylation. A Collagen-like domain is found at 27–99 (GSPGIPGTPG…PGERGPPGLP (73 aa)). Proline 29, proline 32, proline 35, proline 41, proline 53, proline 56, proline 62, proline 66, and proline 69 each carry 4-hydroxyproline. The disordered stretch occupies residues 32 to 101 (PGTPGSHGLP…ERGPPGLPAS (70 aa)). Residues 41–50 (PGRDGRDGVK) are compositionally biased toward basic and acidic residues. Over residues 53–64 (PGPPGPMGPPGV) the composition is skewed to pro residues. The span at 83–92 (ERGDKGDPGE) shows a compositional bias: basic and acidic residues. Residues 131–247 (LAVGDKVFAT…LQSRLTICEF (117 aa)) enclose the C-type lectin domain. Intrachain disulfides connect cysteine 154-cysteine 245 and cysteine 223-cysteine 237. A glycan (N-linked (GlcNAc...) asparagine) is linked at asparagine 206. The Ca(2+) site is built by glutamate 214, arginine 216, asparagine 233, and aspartate 234.

This sequence belongs to the SFTPA family. Oligomeric complex of 6 set of homotrimers.

The protein resides in the secreted. The protein localises to the extracellular space. It localises to the extracellular matrix. Its subcellular location is the surface film. Functionally, in presence of calcium ions, it binds to surfactant phospholipids and contributes to lower the surface tension at the air-liquid interface in the alveoli of the mammalian lung and is essential for normal respiration. Enhances the expression of MYO18A/SP-R210 on alveolar macrophages. The chain is Pulmonary surfactant-associated protein A (SFTPA1) from Cavia porcellus (Guinea pig).